A 241-amino-acid chain; its full sequence is Pyridoxal phosphate phosphatase PHOSPHO2 (241 aa).

Residue aspartate 8 is the Nucleophile of the active site. Mg(2+) contacts are provided by aspartate 8 and aspartate 10. The Proton donor role is filled by aspartate 10. Substrate-binding residues include aspartate 19 and aspartate 99. Position 179 (aspartate 179) interacts with Mg(2+).

Belongs to the HAD-like hydrolase superfamily. PHOSPHO family. Requires Mg(2+) as cofactor.

It catalyses the reaction pyridoxal 5'-phosphate + H2O = pyridoxal + phosphate. In terms of biological role, phosphatase that has high activity toward pyridoxal 5'-phosphate (PLP). Also active at much lower level toward pyrophosphate, phosphoethanolamine (PEA), phosphocholine (PCho), phospho-l-tyrosine, fructose-6-phosphate, p-nitrophenyl phosphate, and h-glycerophosphate. This is Pyridoxal phosphate phosphatase PHOSPHO2 (Phospho2) from Rattus norvegicus (Rat).